The sequence spans 151 residues: Small ribosomal subunit protein uS15 (151 aa).

Phosphoserine is present on residues Ser21 and Ser32.

It belongs to the universal ribosomal protein uS15 family. In terms of assembly, component of the small ribosomal subunit (SSU). Mature yeast ribosomes consist of a small (40S) and a large (60S) subunit. The 40S small subunit contains 1 molecule of ribosomal RNA (18S rRNA) and at least 33 different proteins. The large 60S subunit contains 3 rRNA molecules (25S, 5.8S and 5S rRNA) and at least 46 different proteins.

It localises to the cytoplasm. Component of the ribosome, a large ribonucleoprotein complex responsible for the synthesis of proteins in the cell. The small ribosomal subunit (SSU) binds messenger RNAs (mRNAs) and translates the encoded message by selecting cognate aminoacyl-transfer RNA (tRNA) molecules. The large subunit (LSU) contains the ribosomal catalytic site termed the peptidyl transferase center (PTC), which catalyzes the formation of peptide bonds, thereby polymerizing the amino acids delivered by tRNAs into a polypeptide chain. The nascent polypeptides leave the ribosome through a tunnel in the LSU and interact with protein factors that function in enzymatic processing, targeting, and the membrane insertion of nascent chains at the exit of the ribosomal tunnel. The protein is Small ribosomal subunit protein uS15 (rps13) of Schizosaccharomyces pombe (strain 972 / ATCC 24843) (Fission yeast).